The primary structure comprises 80 residues: Exodeoxyribonuclease 7 small subunit (80 aa).

The protein belongs to the XseB family. In terms of assembly, heterooligomer composed of large and small subunits.

Its subcellular location is the cytoplasm. It catalyses the reaction Exonucleolytic cleavage in either 5'- to 3'- or 3'- to 5'-direction to yield nucleoside 5'-phosphates.. In terms of biological role, bidirectionally degrades single-stranded DNA into large acid-insoluble oligonucleotides, which are then degraded further into small acid-soluble oligonucleotides. This Rickettsia bellii (strain OSU 85-389) protein is Exodeoxyribonuclease 7 small subunit.